We begin with the raw amino-acid sequence, 109 residues long: MIKLKVKKGDEVVVITGKHKGKKGKILKVFPEDSKVIVSGVNVVKKHTKPNQMSEGGIITKELPIHISNIAHIDPKTGNPTKVAFKFLEDGSKVRVAKKSGEIIGKEGK.

The protein belongs to the universal ribosomal protein uL24 family. In terms of assembly, part of the 50S ribosomal subunit.

One of two assembly initiator proteins, it binds directly to the 5'-end of the 23S rRNA, where it nucleates assembly of the 50S subunit. Functionally, one of the proteins that surrounds the polypeptide exit tunnel on the outside of the subunit. This Rickettsia rickettsii (strain Iowa) protein is Large ribosomal subunit protein uL24.